The chain runs to 124 residues: Large ribosomal subunit protein eL31 (124 aa).

Belongs to the eukaryotic ribosomal protein eL31 family. Component of the large ribosomal subunit.

The protein localises to the cytoplasm. Its function is as follows. Component of the large ribosomal subunit. The ribosome is a large ribonucleoprotein complex responsible for the synthesis of proteins in the cell. This Paralichthys olivaceus (Bastard halibut) protein is Large ribosomal subunit protein eL31 (rpl31).